A 133-amino-acid chain; its full sequence is Ribosome-binding factor A (133 aa).

The protein belongs to the RbfA family. In terms of assembly, monomer. Binds 30S ribosomal subunits, but not 50S ribosomal subunits or 70S ribosomes.

It is found in the cytoplasm. Functionally, one of several proteins that assist in the late maturation steps of the functional core of the 30S ribosomal subunit. Associates with free 30S ribosomal subunits (but not with 30S subunits that are part of 70S ribosomes or polysomes). Required for efficient processing of 16S rRNA. May interact with the 5'-terminal helix region of 16S rRNA. The chain is Ribosome-binding factor A from Chlamydia muridarum (strain MoPn / Nigg).